Reading from the N-terminus, the 177-residue chain is MSRIGRAPVEVPGGVSVEISARSVKVRGPKGELTVPVGRGVSVREEDGKLLVERSSDAPQHRAMHGLTRSLLHNAVVGVTDGFAKTLQISGVGYRAQLQGQNVVLQVGYSHPVTVQPREGIQLEVPNPTTIVVRGIDKQQVGQMAAEIRRVRPPEPYKGKGIRYEGEQVRRKVGKAG.

Belongs to the universal ribosomal protein uL6 family. Part of the 50S ribosomal subunit.

This protein binds to the 23S rRNA, and is important in its secondary structure. It is located near the subunit interface in the base of the L7/L12 stalk, and near the tRNA binding site of the peptidyltransferase center. The protein is Large ribosomal subunit protein uL6 of Rubrobacter xylanophilus (strain DSM 9941 / JCM 11954 / NBRC 16129 / PRD-1).